We begin with the raw amino-acid sequence, 67 residues long: Cell division protein ZapB (67 aa).

Residues 3 to 59 (LELLSQLETKIQTALETIELLKLELDEEKEKAANLAEQNHQLKQELSSWNDKITGLV) are a coiled coil.

The protein belongs to the ZapB family. As to quaternary structure, homodimer. The ends of the coiled-coil dimer bind to each other, forming polymers. Interacts with FtsZ.

It is found in the cytoplasm. Its function is as follows. Non-essential, abundant cell division factor that is required for proper Z-ring formation. It is recruited early to the divisome by direct interaction with FtsZ, stimulating Z-ring assembly and thereby promoting cell division earlier in the cell cycle. Its recruitment to the Z-ring requires functional FtsA or ZipA. The chain is Cell division protein ZapB from Shewanella amazonensis (strain ATCC BAA-1098 / SB2B).